We begin with the raw amino-acid sequence, 186 residues long: ATP synthase subunit b (186 aa).

Residues isoleucine 25–proline 45 traverse the membrane as a helical segment.

Belongs to the ATPase B chain family. As to quaternary structure, F-type ATPases have 2 components, F(1) - the catalytic core - and F(0) - the membrane proton channel. F(1) has five subunits: alpha(3), beta(3), gamma(1), delta(1), epsilon(1). F(0) has three main subunits: a(1), b(2) and c(10-14). The alpha and beta chains form an alternating ring which encloses part of the gamma chain. F(1) is attached to F(0) by a central stalk formed by the gamma and epsilon chains, while a peripheral stalk is formed by the delta and b chains.

Its subcellular location is the cell membrane. F(1)F(0) ATP synthase produces ATP from ADP in the presence of a proton or sodium gradient. F-type ATPases consist of two structural domains, F(1) containing the extramembraneous catalytic core and F(0) containing the membrane proton channel, linked together by a central stalk and a peripheral stalk. During catalysis, ATP synthesis in the catalytic domain of F(1) is coupled via a rotary mechanism of the central stalk subunits to proton translocation. Its function is as follows. Component of the F(0) channel, it forms part of the peripheral stalk, linking F(1) to F(0). The chain is ATP synthase subunit b from Nocardia farcinica (strain IFM 10152).